A 336-amino-acid polypeptide reads, in one-letter code: Fructose-1,6-bisphosphatase class 1 (336 aa).

Mg(2+) contacts are provided by Glu90, Asp112, Leu114, and Asp115. Residues 115–118 (DGSS), Asn211, and Lys277 each bind substrate. Residue Glu283 participates in Mg(2+) binding.

The protein belongs to the FBPase class 1 family. In terms of assembly, homotetramer. Requires Mg(2+) as cofactor.

It is found in the cytoplasm. It carries out the reaction beta-D-fructose 1,6-bisphosphate + H2O = beta-D-fructose 6-phosphate + phosphate. Its pathway is carbohydrate biosynthesis; gluconeogenesis. The sequence is that of Fructose-1,6-bisphosphatase class 1 from Pseudomonas fluorescens (strain SBW25).